The following is a 212-amino-acid chain: Protein HP-25 homolog 1 (212 aa).

An N-terminal signal peptide occupies residues 1–34; sequence MPGGRRRVGSMNIAGFWILAQFVLLLVANVKSSA. A disordered region spans residues 36 to 66; the sequence is SELCGPRGARGPPGLSGLPGPPGYTGPIGMP. Residues 40 to 53 show a composition bias toward low complexity; the sequence is GPRGARGPPGLSGL. The Collagen-like domain maps to 40 to 76; sequence GPRGARGPPGLSGLPGPPGYTGPIGMPGLTGRPGLPG. Residues 82 to 212 enclose the C1q domain; sequence PPLPQSAFSV…VFYGFLLNGN (131 aa). Asn-125 carries an N-linked (GlcNAc...) asparagine glycan.

The protein localises to the secreted. This Bos taurus (Bovine) protein is Protein HP-25 homolog 1.